Here is a 284-residue protein sequence, read N- to C-terminus: Tropomyosin beta chain (284 aa).

An N-acetylmethionine modification is found at Met-1. The disordered stretch occupies residues Met-1–Lys-65. The stretch at Met-1–Leu-284 forms a coiled coil. Basic and acidic residues-rich tracts occupy residues Lys-12 to Glu-40 and Lys-51 to Lys-65. Residue Thr-53 is modified to Phosphothreonine. The residue at position 61 (Ser-61) is a Phosphoserine; by PIK3CG. Residue Thr-79 is modified to Phosphothreonine. Position 87 is a phosphoserine (Ser-87). A Phosphothreonine modification is found at Thr-108. Positions Glu-117–Lys-136 are disordered. Phosphoserine occurs at positions 158, 206, and 215. The residue at position 252 (Thr-252) is a Phosphothreonine. The residue at position 261 (Tyr-261) is a Phosphotyrosine. Ser-271 carries the post-translational modification Phosphoserine. A Phosphothreonine modification is found at Thr-282. Ser-283 carries the phosphoserine modification.

This sequence belongs to the tropomyosin family. As to quaternary structure, homodimer. Heterodimer of an alpha (TPM1, TPM3 or TPM4) and a beta (TPM2) chain. Post-translationally, phosphorylated on Ser-61 by PIK3CG. Phosphorylation on Ser-61 is required for ADRB2 internalization. Present in primary breast cancer tissue, absent from normal breast tissue.

The protein resides in the cytoplasm. Its subcellular location is the cytoskeleton. Binds to actin filaments in muscle and non-muscle cells. Plays a central role, in association with the troponin complex, in the calcium dependent regulation of vertebrate striated muscle contraction. Smooth muscle contraction is regulated by interaction with caldesmon. In non-muscle cells is implicated in stabilizing cytoskeleton actin filaments. The non-muscle isoform may have a role in agonist-mediated receptor internalization. This Homo sapiens (Human) protein is Tropomyosin beta chain (TPM2).